The sequence spans 286 residues: 4-diphosphocytidyl-2-C-methyl-D-erythritol kinase (286 aa).

Residue K11 is part of the active site. 94-104 serves as a coordination point for ATP; it reads PMGGGIGGGSS. D136 is a catalytic residue.

It belongs to the GHMP kinase family. IspE subfamily.

The catalysed reaction is 4-CDP-2-C-methyl-D-erythritol + ATP = 4-CDP-2-C-methyl-D-erythritol 2-phosphate + ADP + H(+). Its pathway is isoprenoid biosynthesis; isopentenyl diphosphate biosynthesis via DXP pathway; isopentenyl diphosphate from 1-deoxy-D-xylulose 5-phosphate: step 3/6. Functionally, catalyzes the phosphorylation of the position 2 hydroxy group of 4-diphosphocytidyl-2C-methyl-D-erythritol. The sequence is that of 4-diphosphocytidyl-2-C-methyl-D-erythritol kinase from Pseudomonas putida (strain W619).